The primary structure comprises 616 residues: Chaperone protein HscA (616 aa).

It belongs to the heat shock protein 70 family.

In terms of biological role, chaperone involved in the maturation of iron-sulfur cluster-containing proteins. Has a low intrinsic ATPase activity which is markedly stimulated by HscB. Involved in the maturation of IscU. This Citrobacter koseri (strain ATCC BAA-895 / CDC 4225-83 / SGSC4696) protein is Chaperone protein HscA.